A 951-amino-acid chain; its full sequence is 5'-3' exoribonuclease 2 (951 aa).

The CCHC-type zinc-finger motif lies at 262-278 (PCALCNQFGHEVKDCEG). The residue at position 286 (Lys286) is an N6-acetyllysine. The disordered stretch occupies residues 408–508 (KDDEDSFRRR…SDSEPEPEDN (101 aa)). A compositionally biased stretch (basic residues) spans 416 to 426 (RRQKEKRKRMK). The residue at position 439 (Thr439) is a Phosphothreonine. 2 stretches are compositionally biased toward polar residues: residues 445–458 (SRNSPGCQVASNPR) and 467–485 (QRNSSPSISPNTSFASDGS). Phosphoserine is present on residues Ser448, Ser471, Ser473, Ser475, Ser482, Ser487, Ser499, Ser501, and Ser678. Arg824, Arg847, and Arg851 each carry asymmetric dimethylarginine; alternate. Residues Arg824, Arg847, and Arg851 each carry the omega-N-methylarginine; alternate modification. Arg880 is modified (asymmetric dimethylarginine). Position 883 is an asymmetric dimethylarginine; alternate (Arg883). Position 883 is an omega-N-methylarginine; alternate (Arg883). Arg895 carries the omega-N-methylarginine modification. A disordered region spans residues 907 to 951 (NQYQMLGGPGGYPPRRDDHRGGRQGYPREGRKYPLPPPSGRYSWN). Positions 920–938 (PRRDDHRGGRQGYPREGRK) are enriched in basic and acidic residues. The residue at position 947 (Arg947) is an Asymmetric dimethylarginine; alternate. Arg947 is subject to Omega-N-methylarginine; alternate.

The protein belongs to the 5'-3' exonuclease family. XRN2/RAT1 subfamily. Interacts with POLR2A and SMN1/SMN2. Interacts with CDKN2AIP and NKRF. Interacts with CDKN2AIPNL; the interaction is direct. Interacts with TRIM71 (via NHL repeats) in an RNA-dependent manner. Interacts with DHX34; the interaction is RNA-independent. Expressed in the spleen, testis, heart, brain, lung, liver, skeletal muscle, and kidney.

The protein localises to the nucleus. It is found in the nucleolus. In terms of biological role, possesses 5'-&gt;3' exoribonuclease activity. May promote the termination of transcription by RNA polymerase II. During transcription termination, cleavage at the polyadenylation site liberates a 5' fragment which is subsequently processed to form the mature mRNA and a 3' fragment which remains attached to the elongating polymerase. The processive degradation of this 3' fragment by this protein may promote termination of transcription. Binds to RNA polymerase II (RNAp II) transcription termination R-loops formed by G-rich pause sites. This is 5'-3' exoribonuclease 2 (Xrn2) from Mus musculus (Mouse).